The following is a 295-amino-acid chain: Protein LplC (295 aa).

The next 6 membrane-spanning stretches (helical) occupy residues 21–41 (ILFL…IIAG), 81–101 (VSIF…FTMA), 116–136 (LNLV…YLVV), 142–162 (LDTY…LIII), 199–219 (VIAT…FHAL), and 260–280 (GIKL…YPFL). The region spanning 79-280 (MGVSIFITVV…LPILAVYPFL (202 aa)) is the ABC transmembrane type-1 domain.

It belongs to the binding-protein-dependent transport system permease family. CysTW subfamily.

It is found in the cell membrane. This chain is Protein LplC (lplC), found in Bacillus subtilis (strain 168).